The chain runs to 183 residues: Interleukin-24 (183 aa).

A signal peptide spans 1-28; it reads MQTSLRQQILPGLSLILLVLNQVPELQG. Residues C36 and C83 are joined by a disulfide bond. N76 is a glycosylation site (N-linked (GlcNAc...) asparagine). K99 participates in a covalent cross-link: Glycyl lysine isopeptide (Lys-Gly) (interchain with G-Cter in ubiquitin).

It belongs to the IL-10 family. Post-translationally, glycosylated. Ubiquitination at Lys-99 promotes proteasomal degradation.

It localises to the secreted. Its function is as follows. Multifunctional cytokine mainly produced by T-cells that plays a regulatory role in immune response, tissue homeostasis, host defense, and oncogenesis. Possesses antiviral functions and induces the type I interferon response during influenza infection. Signals through two receptor complexes IL20RA/IL20RB or IL20RB/IL22RA1. In turn, stimulates the JAK1-STAT3 and MAPK pathways and promotes the secretion of pro-inflammatory mediators including IL8 and MMP1. Intracellularly, maintains endoplasmic reticulum homeostasis by restricting the eIF2alpha-CHOP pathway-mediated stress signal. In addition, acts as a quality control mechanism for the ubiquitin proteasome system by alerting the cell to proteasome dysfunction through activation of PKR/EIF2AK2. This Rattus norvegicus (Rat) protein is Interleukin-24 (Il24).